The chain runs to 210 residues: Putative protein-lysine deacylase ABHD14B (210 aa).

At alanine 2 the chain carries N-acetylalanine. Serine 91 carries the post-translational modification Phosphoserine. Active-site charge relay system residues include serine 111, aspartate 162, and histidine 188.

This sequence belongs to the AB hydrolase superfamily. ABHD14 family. May interact with TAF1. In terms of tissue distribution, ubiquitous. Detected in spleen, thymus, prostate, testis, ovary, small intestine, colon, peripheral blood leukocyte, heart, placenta, lung, liver, skeletal muscle, pancreas and kidney.

It localises to the cytoplasm. The protein resides in the nucleus. The enzyme catalyses L-lysyl-[protein] + acetyl-CoA = N(6)-acetyl-L-lysyl-[protein] + CoA + H(+). In terms of biological role, acts as an atypical protein-lysine deacetylase in vitro. Catalyzes the deacetylation of lysine residues using CoA as substrate, generating acetyl-CoA and the free amine of protein-lysine residues. Additional experiments are however required to confirm the protein-lysine deacetylase activity in vivo. Has hydrolase activity towards various surrogate p-nitrophenyl (pNp) substrates, such as pNp-butyrate, pNp-acetate and pNp-octanoate in vitro, with a strong preference for pNp-acetate. May activate transcription. In Homo sapiens (Human), this protein is Putative protein-lysine deacylase ABHD14B.